Here is a 251-residue protein sequence, read N- to C-terminus: Probable transcriptional regulatory protein CT1665 (251 aa).

The protein belongs to the TACO1 family.

The protein localises to the cytoplasm. In Chlorobaculum tepidum (strain ATCC 49652 / DSM 12025 / NBRC 103806 / TLS) (Chlorobium tepidum), this protein is Probable transcriptional regulatory protein CT1665.